Consider the following 946-residue polypeptide: Serine/arginine repetitive matrix protein 1 (946 aa).

Position 1 is an N-acetylmethionine (Met-1). Positions 1–151 (MDAGFFRGTS…ASLKKQDEDK (151 aa)) are necessary for DNA and RNA-binding. Residues 1 to 156 (MDAGFFRGTS…QDEDKDKRDK (156 aa)) are necessary for mRNA 3'-end cleavage and cytoplasmic accumulation. Residue Arg-7 is modified to Citrulline. In terms of domain architecture, PWI spans 27-126 (QLKFAECLEK…AGIPSAFLEL (100 aa)). Residue Lys-127 forms a Glycyl lysine isopeptide (Lys-Gly) (interchain with G-Cter in SUMO2) linkage. An N6-acetyllysine modification is found at Lys-140. The span at 142-170 (ASLKKQDEDKDKRDKEEKESSREKRERSR) shows a compositional bias: basic and acidic residues. Residues 142–946 (ASLKKQDEDK…MRKAQVSPQS (805 aa)) are disordered. Basic residues predominate over residues 171–207 (SPRRRKSRSPSPRRRSSPVRRERKRSHSRSPRHRTKS). Over residues 214–234 (PEKKEKSPELPEPSVRMKDSS) the composition is skewed to basic and acidic residues. Ser-220 and Ser-227 each carry phosphoserine. Lys-231 participates in a covalent cross-link: Glycyl lysine isopeptide (Lys-Gly) (interchain with G-Cter in SUMO1); alternate. A Glycyl lysine isopeptide (Lys-Gly) (interchain with G-Cter in SUMO2); alternate cross-link involves residue Lys-231. Residues Ser-234 and Ser-240 each carry the phosphoserine modification. Residue Thr-241 is modified to Phosphothreonine. A compositionally biased stretch (basic and acidic residues) spans 246 to 273 (KAPKPEPVPEPKEPSPEKNSKKEKEKTR). Lys-249 participates in a covalent cross-link: Glycyl lysine isopeptide (Lys-Gly) (interchain with G-Cter in SUMO2). Residue Ser-260 is modified to Phosphoserine. Basic residues-rich tracts occupy residues 274–327 (PRSR…RTPP) and 334–349 (PRHRRSRSPGRRRRRS). Positions 298 to 707 (RRHRSRSRSY…NKRHSPSPRP (410 aa)) are necessary for speckles and matrix localization. The span at 350-366 (SASLSGSSSSSSSSRSR) shows a compositional bias: low complexity. Ser-387, Ser-389, Ser-391, and Ser-400 each carry phosphoserine. Thr-404 bears the Phosphothreonine mark. Phosphoserine is present on Ser-412. Thr-414 bears the Phosphothreonine mark. A phosphoserine mark is found at Ser-418, Ser-427, Ser-429, and Ser-434. Polar residues predominate over residues 426–436 (VSVSPGRTSGK). Lys-445 is covalently cross-linked (Glycyl lysine isopeptide (Lys-Gly) (interchain with G-Cter in SUMO2)). 2 positions are modified to phosphoserine: Ser-448 and Ser-450. Residue Lys-457 forms a Glycyl lysine isopeptide (Lys-Gly) (interchain with G-Cter in SUMO2) linkage. 2 positions are modified to phosphoserine: Ser-461 and Ser-463. A Glycyl lysine isopeptide (Lys-Gly) (interchain with G-Cter in SUMO2) cross-link involves residue Lys-470. Phosphoserine is present on Ser-476. Positions 476-499 (SVQQRRQYRRQNQQSSSDSGSSST) are enriched in low complexity. The span at 501–516 (EDERPKRSHVKNGEVG) shows a compositional bias: basic and acidic residues. Phosphoserine occurs at positions 522, 524, 526, 528, 530, 561, 563, 572, and 574. The segment covering 555–572 (SSRRRRSPSPPPARRRRS) has biased composition (basic residues). Pro residues predominate over residues 574–585 (SPAPPPPPPPPP). Residues 586–611 (PRRRRSPTPPPRRRTPSPPPRRRSPS) show a composition bias toward basic residues. A phosphothreonine mark is found at Thr-593 and Thr-600. Residue Ser-602 is modified to Phosphoserine. Residues 612 to 624 (PRRYSPPIQRRYS) are compositionally biased toward low complexity. Residue Tyr-615 is modified to Phosphotyrosine. Phosphoserine is present on residues Ser-616, Ser-624, and Ser-626. The residue at position 633 (Thr-633) is a Phosphothreonine. Ser-635, Ser-645, Ser-647, Ser-655, and Ser-657 each carry phosphoserine. Over residues 640-655 (PKRRASPSPPPKRRVS) the composition is skewed to basic residues. The span at 668–682 (TKRRSPSLSSKHRKG) shows a compositional bias: basic residues. The segment covering 704 to 718 (SPRPRAPQTSSPPPV) has biased composition (pro residues). Ser-713, Ser-714, Ser-723, Ser-725, Ser-731, and Ser-733 each carry phosphoserine. Positions 724–736 (ASPQGRQSPSPST) are enriched in polar residues. The residue at position 736 (Thr-736) is a Phosphothreonine. 10 positions are modified to phosphoserine: Ser-779, Ser-781, Ser-789, Ser-793, Ser-795, Ser-797, Ser-810, Ser-814, Ser-816, and Ser-818. Low complexity predominate over residues 779 to 800 (SPSPQSVRRVSSSRSVSGSPEP). The residue at position 819 (Thr-819) is a Phosphothreonine. Residues Ser-822 and Ser-832 each carry the phosphoserine modification. Polar residues predominate over residues 833-842 (PTPSLSPARN). Thr-834 bears the Phosphothreonine mark. Phosphoserine is present on residues Ser-836, Ser-838, and Ser-843. The segment covering 850-875 (KKKKKKKDKKHKKDKKHKKHKKHKKE) has biased composition (basic residues). Low complexity predominate over residues 878-907 (VTIATPATAAPAAVSAATTTSAQEEPAAAP). Thr-913 is subject to Phosphothreonine. Phosphoserine is present on Ser-915. Positions 924–934 (DLERHLREKAL) are enriched in basic and acidic residues. At Ser-943 the chain carries Phosphoserine.

It belongs to the splicing factor SR family. Identified in the spliceosome C complex. Found in a pre-mRNA splicing complex with SFRS4, SFRS5, SNRP70, SNRPA1, SRRM1 and SRRM2. Component of the minor spliceosome, which splices U12-type introns. Found in a pre-mRNA exonic splicing enhancer (ESE) complex with SNRP70, SNRPA1, SRRM1 and TRA2B/SFRS10. Found in a mRNA splicing-dependent exon junction complex (EJC) with DEK, PRPF8, NCBP1, RBM8A, RNPS1, SRRM1 and ALYREF/THOC4. Interacts with DDX39B, CPSF1, RBM8A, RNPS1, and ALYREF/THOC4. Seems to be a compound of RNA export complexes that are released from speckles in a ATP-dependent manner. Citrullinated by PADI4. In terms of processing, phosphorylated on multiple serine and threonine residues by DYRK3 during the G2-to-M transition, after the nuclear-envelope breakdown. Phosphorylation by DYRK3 promotes disassembly of nuclear speckles.

The protein localises to the nucleus matrix. It is found in the nucleus speckle. In terms of biological role, part of pre- and post-splicing multiprotein mRNP complexes. As a component of the minor spliceosome, involved in the splicing of U12-type introns in pre-mRNAs. Involved in numerous pre-mRNA processing events. Promotes constitutive and exonic splicing enhancer (ESE)-dependent splicing activation by bridging together sequence-specific (SR family proteins, SFRS4, SFRS5 and TRA2B/SFRS10) and basal snRNP (SNRP70 and SNRPA1) factors of the spliceosome. Stimulates mRNA 3'-end cleavage independently of the formation of an exon junction complex. Binds both pre-mRNA and spliced mRNA 20-25 nt upstream of exon-exon junctions. Binds RNA and DNA with low sequence specificity and has similar preference for either double- or single-stranded nucleic acid substrates. This Mus musculus (Mouse) protein is Serine/arginine repetitive matrix protein 1 (Srrm1).